The primary structure comprises 107 residues: uncharacterized protein (107 aa).

The next 3 helical transmembrane spans lie at 20 to 40, 49 to 69, and 86 to 106; these read FISLISSSTSELPLFVVEVGI, PAILSILVLNALEVSSFISTV, and VVMLKILAFLLLEGIIIKLFL.

Its subcellular location is the membrane. This is an uncharacterized protein from Saccharomyces cerevisiae (strain ATCC 204508 / S288c) (Baker's yeast).